A 739-amino-acid chain; its full sequence is Phosphoribosylformylglycinamidine synthase subunit PurL (739 aa).

Histidine 54 is an active-site residue. ATP contacts are provided by tyrosine 57 and lysine 96. Glutamate 98 is a Mg(2+) binding site. Residues 99–102 (SHNH) and arginine 121 contribute to the substrate site. Histidine 100 functions as the Proton acceptor in the catalytic mechanism. Aspartate 122 is a binding site for Mg(2+). Glutamine 245 contacts substrate. Aspartate 275 serves as a coordination point for Mg(2+). 319–321 (ESQ) serves as a coordination point for substrate. Residues aspartate 504 and glycine 541 each contribute to the ATP site. Residue asparagine 542 participates in Mg(2+) binding. Residue serine 544 participates in substrate binding.

The protein belongs to the FGAMS family. Monomer. Part of the FGAM synthase complex composed of 1 PurL, 1 PurQ and 2 PurS subunits.

The protein resides in the cytoplasm. The enzyme catalyses N(2)-formyl-N(1)-(5-phospho-beta-D-ribosyl)glycinamide + L-glutamine + ATP + H2O = 2-formamido-N(1)-(5-O-phospho-beta-D-ribosyl)acetamidine + L-glutamate + ADP + phosphate + H(+). It functions in the pathway purine metabolism; IMP biosynthesis via de novo pathway; 5-amino-1-(5-phospho-D-ribosyl)imidazole from N(2)-formyl-N(1)-(5-phospho-D-ribosyl)glycinamide: step 1/2. In terms of biological role, part of the phosphoribosylformylglycinamidine synthase complex involved in the purines biosynthetic pathway. Catalyzes the ATP-dependent conversion of formylglycinamide ribonucleotide (FGAR) and glutamine to yield formylglycinamidine ribonucleotide (FGAM) and glutamate. The FGAM synthase complex is composed of three subunits. PurQ produces an ammonia molecule by converting glutamine to glutamate. PurL transfers the ammonia molecule to FGAR to form FGAM in an ATP-dependent manner. PurS interacts with PurQ and PurL and is thought to assist in the transfer of the ammonia molecule from PurQ to PurL. The chain is Phosphoribosylformylglycinamidine synthase subunit PurL from Lactococcus lactis subsp. lactis (strain IL1403) (Streptococcus lactis).